A 435-amino-acid polypeptide reads, in one-letter code: Eukaryotic translation initiation factor 3 subunit E (435 aa).

Residues 219 to 392 enclose the PCI domain; that stretch reads FFNHAKGRDL…GHVVMGTQPL (174 aa).

Belongs to the eIF-3 subunit E family. Component of the eukaryotic translation initiation factor 3 (eIF-3) complex.

Its subcellular location is the cytoplasm. In terms of biological role, component of the eukaryotic translation initiation factor 3 (eIF-3) complex, which is involved in protein synthesis of a specialized repertoire of mRNAs and, together with other initiation factors, stimulates binding of mRNA and methionyl-tRNAi to the 40S ribosome. The eIF-3 complex specifically targets and initiates translation of a subset of mRNAs involved in cell proliferation. The polypeptide is Eukaryotic translation initiation factor 3 subunit E (eIF3-S6) (Aedes aegypti (Yellowfever mosquito)).